Reading from the N-terminus, the 910-residue chain is DnaJ-like protein MG200 homolog (910 aa).

The 70-residue stretch at 4-73 (AKRDYYEVLG…RANYDKYGHD (70 aa)) folds into the J domain. 3 disordered regions span residues 102 to 160 (DNLS…DDIP), 260 to 408 (TEPS…LEQD), and 451 to 486 (VLSD…STAP). Residues 111–121 (KKEKTKTKKKG) show a composition bias toward basic residues. The span at 273–283 (DSDAVTAATTV) shows a compositional bias: low complexity. Residues 357–379 (SDEADATNEPTEQDTISEPEQET) are compositionally biased toward acidic residues. Residues 451 to 462 (VLSDQNPNPQTP) show a composition bias toward polar residues.

The sequence is that of DnaJ-like protein MG200 homolog from Mycoplasma pneumoniae (strain ATCC 29342 / M129 / Subtype 1) (Mycoplasmoides pneumoniae).